The chain runs to 217 residues: Ribosome maturation factor RimP (217 aa).

It belongs to the RimP family.

The protein localises to the cytoplasm. Required for maturation of 30S ribosomal subunits. The chain is Ribosome maturation factor RimP from Nocardia farcinica (strain IFM 10152).